The following is an 83-amino-acid chain: Toxin AahP985 (83 aa).

Positions 1–18 (MNYLVMISLALLIAGVDS) are cleaved as a signal peptide. The LCN-type CS-alpha/beta domain occupies 20–82 (RDAYIAKNDN…VPIKLSGECH (63 aa)). 4 cysteine pairs are disulfide-bonded: Cys-30-Cys-81, Cys-34-Cys-54, Cys-40-Cys-64, and Cys-44-Cys-66.

Belongs to the long (4 C-C) scorpion toxin superfamily. Sodium channel inhibitor family. Alpha subfamily. In terms of tissue distribution, expressed by the venom gland.

Its subcellular location is the secreted. Binds voltage-independently at site-3 of sodium channels (Nav) and inhibits the inactivation of the activated channels, thereby blocking neuronal transmission. The sequence is that of Toxin AahP985 from Androctonus australis (Sahara scorpion).